Reading from the N-terminus, the 248-residue chain is DNA repair protein RecO (248 aa).

The protein belongs to the RecO family.

Functionally, involved in DNA repair and RecF pathway recombination. The sequence is that of DNA repair protein RecO from Bacillus cereus (strain B4264).